A 174-amino-acid chain; its full sequence is Co-chaperone protein HscB homolog (174 aa).

The J domain occupies 2-74; that stretch reads NYFELFKFSP…IRRAEHMLSL (73 aa).

Belongs to the HscB family. As to quaternary structure, interacts with HscA and stimulates its ATPase activity.

In terms of biological role, co-chaperone involved in the maturation of iron-sulfur cluster-containing proteins. Seems to help targeting proteins to be folded toward HscA. This chain is Co-chaperone protein HscB homolog, found in Shewanella sp. (strain MR-4).